The chain runs to 119 residues: uncharacterized protein (119 aa).

This is an uncharacterized protein from Bacillus subtilis (strain 168).